The chain runs to 120 residues: Large ribosomal subunit protein uL22 (120 aa).

A disordered region spans residues 1-25 (MFVNKKYTAKGKNLPSSPKKVRPIA).

It belongs to the universal ribosomal protein uL22 family. Part of the 50S ribosomal subunit.

Functionally, this protein binds specifically to 23S rRNA; its binding is stimulated by other ribosomal proteins, e.g. L4, L17, and L20. It is important during the early stages of 50S assembly. It makes multiple contacts with different domains of the 23S rRNA in the assembled 50S subunit and ribosome. In terms of biological role, the globular domain of the protein is located near the polypeptide exit tunnel on the outside of the subunit, while an extended beta-hairpin is found that lines the wall of the exit tunnel in the center of the 70S ribosome. The polypeptide is Large ribosomal subunit protein uL22 (Borrelia duttonii (strain Ly)).